The primary structure comprises 355 residues: Anthocyanin synthase (355 aa).

Substrate contacts are provided by Tyr-145 and Lys-216. A Fe2OG dioxygenase domain is found at 211–310; it reads LLLQMKINYY…RISWAVFCEP (100 aa). Residue 218–220 participates in 2-oxoglutarate binding; sequence NYY. Position 235 (His-235) interacts with Fe cation. Residue Thr-236 participates in substrate binding. The Fe cation site is built by Asp-237 and His-291. 2-oxoglutarate contacts are provided by residues Arg-301 and 301–303; that span reads RIS. The substrate site is built by Glu-309 and Lys-344.

This sequence belongs to the iron/ascorbate-dependent oxidoreductase family. The cofactor is L-ascorbate. Requires Fe(2+) as cofactor. In terms of tissue distribution, expressed in stems and leaves. Expressed at low levels in ovaries.

The catalysed reaction is a (2R,3S,4S)-leucoanthocyanidin + 2-oxoglutarate + O2 = a 4-H-anthocyanidin with a 3-hydroxy group + succinate + CO2 + 2 H2O. The protein operates within pigment biosynthesis; anthocyanin biosynthesis. Functionally, involved in anthocyanin biosynthesis by catalyzing the oxidation of leucoanthocyanidins into anthocyanidins. Required for the accumulation of anthocyanin in red-fleshed kiwifruit varieties. This is Anthocyanin synthase from Actinidia chinensis var. chinensis (Chinese soft-hair kiwi).